We begin with the raw amino-acid sequence, 494 residues long: UDP-N-acetylmuramoyl-L-alanyl-D-glutamate--L-lysine ligase (494 aa).

Position 30 (serine 30) interacts with UDP-N-acetyl-alpha-D-muramoyl-L-alanyl-D-glutamate. 110–116 lines the ATP pocket; sequence GTNGKTS. UDP-N-acetyl-alpha-D-muramoyl-L-alanyl-D-glutamate is bound by residues 152-153, serine 179, and arginine 187; that span reads TT. Lysine 219 carries the N6-carboxylysine modification. The L-lysine recognition motif signature appears at 406–409; that stretch reads DNPA.

This sequence belongs to the MurCDEF family. MurE subfamily. In terms of processing, carboxylation is probably crucial for Mg(2+) binding and, consequently, for the gamma-phosphate positioning of ATP.

It localises to the cytoplasm. It catalyses the reaction UDP-N-acetyl-alpha-D-muramoyl-L-alanyl-D-glutamate + L-lysine + ATP = UDP-N-acetyl-alpha-D-muramoyl-L-alanyl-gamma-D-glutamyl-L-lysine + ADP + phosphate + H(+). The protein operates within cell wall biogenesis; peptidoglycan biosynthesis. Its function is as follows. Catalyzes the addition of L-lysine to the nucleotide precursor UDP-N-acetylmuramoyl-L-alanyl-D-glutamate (UMAG) in the biosynthesis of bacterial cell-wall peptidoglycan. This Staphylococcus aureus (strain MW2) protein is UDP-N-acetylmuramoyl-L-alanyl-D-glutamate--L-lysine ligase.